Consider the following 146-residue polypeptide: Snake venom vascular endothelial growth factor toxin (146 aa).

An N-terminal signal peptide occupies residues 1 to 24 (MAAYLLAVAILFCIQGWPLGTVQG). Glutamine 25 carries the pyrrolidone carboxylic acid modification. Disulfide bonds link cysteine 38/cysteine 80, cysteine 69/cysteine 115, and cysteine 73/cysteine 117. The tract at residues 118–146 (RPRSASGVNSRKHKRNPEEGEQRAKFPFV) is disordered. Positions 133–146 (NPEEGEQRAKFPFV) are enriched in basic and acidic residues.

This sequence belongs to the PDGF/VEGF growth factor family. Snake venom VEGF subfamily. Homodimer; disulfide-linked. Interacts with VEGF receptor-1 (FLT1) with a high affinity, whereas it binds to VEGF receptor-2 (KDR) with a low affinity. Does not bind VEGF receptor-3 (FLT4). In terms of tissue distribution, expressed by the venom gland.

Its subcellular location is the secreted. Its function is as follows. Snake venom VEGFs that may contribute to venom dispersion and prey subjugation by inducing vascular permeability and hypotension. This protein induces an increase in capillary permeability after intradermal injection, as well as a drastic hypotensive effect after intravenous injection. The hypotension is mediated by nitric oxide (NO), which is produced by VEGF-activated endothelium NO synthase. Also induces angiogenesis in vitro. Like other crotalid VEGFs, this protein interacts with VEGF receptor-1 (FLT1) with a high affinity, whereas it binds to VEGF receptor-2 (KDR) with a low affinity. This is Snake venom vascular endothelial growth factor toxin from Bothrops erythromelas (Caatinga lance head).